A 591-amino-acid polypeptide reads, in one-letter code: Aspartate--tRNA(Asp/Asn) ligase (591 aa).

Glutamate 176 contacts L-aspartate. An aspartate region spans residues 200-203 (QLFK). Arginine 222 contacts L-aspartate. ATP is bound by residues 222–224 (RDE) and glutamine 231. Histidine 450 contributes to the L-aspartate binding site. Residue glutamate 484 participates in ATP binding. Arginine 491 is an L-aspartate binding site. 536–539 (GLDR) is an ATP binding site.

The protein belongs to the class-II aminoacyl-tRNA synthetase family. Type 1 subfamily. In terms of assembly, homodimer.

Its subcellular location is the cytoplasm. The enzyme catalyses tRNA(Asx) + L-aspartate + ATP = L-aspartyl-tRNA(Asx) + AMP + diphosphate. Aspartyl-tRNA synthetase with relaxed tRNA specificity since it is able to aspartylate not only its cognate tRNA(Asp) but also tRNA(Asn). Reaction proceeds in two steps: L-aspartate is first activated by ATP to form Asp-AMP and then transferred to the acceptor end of tRNA(Asp/Asn). The sequence is that of Aspartate--tRNA(Asp/Asn) ligase from Bacillus anthracis (strain A0248).